The following is a 144-amino-acid chain: MSADDLILHYFEDIKEGQSASLAKTISESDIYLFAGLSMDTNPAHVNEDYAQTTVFKTRIAHGMLSAGFISAVLGTRLPGPGAIYVNQSLKFKAPVRIGDTVTATVTVTGLVPEKKFVTFRTTCTVAGKVVIEGEATVMVPARG.

Positions 13–128 (DIKEGQSASL…TFRTTCTVAG (116 aa)) constitute a MaoC-like domain.

Homotetramer.

The enzyme catalyses a (3R)-3-hydroxyacyl-CoA = a (2E)-enoyl-CoA + H2O. Catalyzes the hydration of trans-2-enoyl-CoAs with a chain-length of 4-6 carbon atoms, forming the corresponding (3R)-3-hydroxyacyl-CoAs, which can then be utilized for the production of polyhydroxyalkanoates (PHA) polymers. Cannot use trans-2,3-octenoyl-CoA as substrate. The polypeptide is (R)-specific enoyl-CoA hydratase (Rhodospirillum rubrum (strain ATCC 11170 / ATH 1.1.1 / DSM 467 / LMG 4362 / NCIMB 8255 / S1)).